Consider the following 478-residue polypeptide: Methionine aminopeptidase 2 (478 aa).

The segment at 1-123 (MAGVEEASSF…DPPSVPICDL (123 aa)) is disordered. N-acetylalanine is present on alanine 2. Residues 36-46 (KKKRRKKKKGK) are compositionally biased toward basic residues. The span at 55–79 (ELDKESGTSVDEVAKQLERQALEEK) shows a compositional bias: basic and acidic residues. Phosphoserine; alternate is present on residues serine 60 and serine 63. Residues serine 60 and serine 63 are each glycosylated (O-linked (GlcNAc) serine; alternate). Residues 80-92 (EKDDDDEDGDGDG) are compositionally biased toward acidic residues. A compositionally biased stretch (basic residues) spans 97–109 (GKKKKKKKKKRGP). Histidine 231 provides a ligand contact to substrate. Positions 251, 262, and 331 each coordinate a divalent metal cation. Position 339 (histidine 339) interacts with substrate. A divalent metal cation-binding residues include glutamate 364 and glutamate 459.

It belongs to the peptidase M24A family. Methionine aminopeptidase eukaryotic type 2 subfamily. Binds EIF2S1 at low magnesium concentrations. Interacts strongly with the eIF-2 gamma-subunit EIF2S3. Requires Co(2+) as cofactor. Zn(2+) serves as cofactor. The cofactor is Mn(2+). Fe(2+) is required as a cofactor. In terms of processing, O-glycosylated; contains 12 O-linked GlcNAc. Contains approximately 12 O-linked N-acetylglucosamine (GlcNAc) residues. O-glycosylation is required for EIF2S1 binding.

It localises to the cytoplasm. The catalysed reaction is Release of N-terminal amino acids, preferentially methionine, from peptides and arylamides.. Cotranslationally removes the N-terminal methionine from nascent proteins. The N-terminal methionine is often cleaved when the second residue in the primary sequence is small and uncharged (Met-Ala-, Cys, Gly, Pro, Ser, Thr, or Val). Functionally, protects eukaryotic initiation factor EIF2S1 from translation-inhibiting phosphorylation by inhibitory kinases such as EIF2AK2/PKR and EIF2AK1/HCR. Plays a critical role in the regulation of protein synthesis. The protein is Methionine aminopeptidase 2 (Metap2) of Rattus norvegicus (Rat).